Consider the following 151-residue polypeptide: Non-specific lipid transfer protein GPI-anchored 30 (151 aa).

The signal sequence occupies residues 1–22; it reads MMMGMKFFSFYVVLLLVAASSG. Disulfide bonds link C32/C69, C39/C53, C54/C97, and C67/C106. N44 carries N-linked (GlcNAc...) asparagine glycosylation. Residue S120 is the site of GPI-anchor amidated serine attachment. Residues 121 to 151 constitute a propeptide, removed in mature form; sequence SSIGNTFSQSYWMTTLAIAATVLSYCHHIIS.

Belongs to the plant LTP family. In terms of tissue distribution, expressed in vascular tissues of all organs. Expressed in seedlings, preferentially in hypocotyls and roots. Also observed in siliques.

The protein resides in the cell membrane. Its function is as follows. Lipid transfer protein that promotes the number of phloem (pro)cambial and pericycle cells. The protein is Non-specific lipid transfer protein GPI-anchored 30 of Arabidopsis thaliana (Mouse-ear cress).